Consider the following 233-residue polypeptide: 5'-methylthioadenosine/S-adenosylhomocysteine nucleosidase (233 aa).

The Proton acceptor role is filled by Glu12. Substrate is bound by residues Gly78, Ile152, and 173 to 174 (ME). Asp197 (proton donor) is an active-site residue.

It belongs to the PNP/UDP phosphorylase family. MtnN subfamily. Homodimer.

It catalyses the reaction S-adenosyl-L-homocysteine + H2O = S-(5-deoxy-D-ribos-5-yl)-L-homocysteine + adenine. It carries out the reaction S-methyl-5'-thioadenosine + H2O = 5-(methylsulfanyl)-D-ribose + adenine. The catalysed reaction is 5'-deoxyadenosine + H2O = 5-deoxy-D-ribose + adenine. It participates in amino-acid biosynthesis; L-methionine biosynthesis via salvage pathway; S-methyl-5-thio-alpha-D-ribose 1-phosphate from S-methyl-5'-thioadenosine (hydrolase route): step 1/2. Its function is as follows. Catalyzes the irreversible cleavage of the glycosidic bond in both 5'-methylthioadenosine (MTA) and S-adenosylhomocysteine (SAH/AdoHcy) to adenine and the corresponding thioribose, 5'-methylthioribose and S-ribosylhomocysteine, respectively. Also cleaves 5'-deoxyadenosine, a toxic by-product of radical S-adenosylmethionine (SAM) enzymes, into 5-deoxyribose and adenine. Thus, is required for in vivo function of the radical SAM enzymes biotin synthase and lipoic acid synthase, that are inhibited by 5'-deoxyadenosine accumulation. The polypeptide is 5'-methylthioadenosine/S-adenosylhomocysteine nucleosidase (Yersinia pestis bv. Antiqua (strain Antiqua)).